Here is a 199-residue protein sequence, read N- to C-terminus: RNA-binding protein, mRNA-processing factor 2a (199 aa).

The region spanning 20-97 (RTLFVSGLPV…QTLRLEFAKA (78 aa)) is the RRM domain.

Interacts with Bucky ball (BUC); to mediate Balbiani body formation and oocyte polarity during early oogenesis.

The protein resides in the cytoplasm. It is found in the nucleus. The protein localises to the stress granule. RNA-binding protein involved in the regulation of smooth muscle cell differentiation and proliferation in the gastrointestinal system. RNA-binding protein localized in Balbiani body (electron-dense aggregates in the oocyte) and germ plasm during oogenesis, and may be required to maintain germ plasm mRNA translational repression. Translational regulator during topographic map formation in the visual system. Establishes oocyte polarity through interaction with Bucky ball (BUC). Acts as a pre-mRNA alternative splicing regulator. Mediates ACTN1 and FLNB alternative splicing. Likely binds to mRNA tandem CAC trinucleotide or CA dinucleotide motifs. This is RNA-binding protein, mRNA-processing factor 2a from Danio rerio (Zebrafish).